Consider the following 408-residue polypeptide: Acetate kinase (408 aa).

Residue Asn10 participates in Mg(2+) binding. Lys17 lines the ATP pocket. Arg96 provides a ligand contact to substrate. Asp153 functions as the Proton donor/acceptor in the catalytic mechanism. Residues 213–217 and 288–290 each bind ATP; these read HLGNG and DLR. Glu393 provides a ligand contact to Mg(2+).

The protein belongs to the acetokinase family. As to quaternary structure, homodimer. It depends on Mg(2+) as a cofactor. Mn(2+) is required as a cofactor.

The protein localises to the cytoplasm. The catalysed reaction is acetate + ATP = acetyl phosphate + ADP. Its pathway is metabolic intermediate biosynthesis; acetyl-CoA biosynthesis; acetyl-CoA from acetate: step 1/2. Its function is as follows. Catalyzes the formation of acetyl phosphate from acetate and ATP. Can also catalyze the reverse reaction. The polypeptide is Acetate kinase (Borrelia duttonii (strain Ly)).